The primary structure comprises 461 residues: D-phenylhydantoinase (461 aa).

A divalent metal cation contacts are provided by histidine 59, histidine 61, and lysine 151. At lysine 151 the chain carries N6-carboxylysine. Tyrosine 156 contacts substrate. A divalent metal cation contacts are provided by histidine 182 and histidine 239. A substrate-binding site is contributed by serine 286. A divalent metal cation is bound at residue aspartate 313. Asparagine 335 contributes to the substrate binding site.

It belongs to the metallo-dependent hydrolases superfamily. Hydantoinase/dihydropyrimidinase family. As to quaternary structure, homotetramer. A divalent metal cation is required as a cofactor. Carboxylation allows a single lysine to coordinate two divalent metal cations.

It catalyses the reaction D-5-phenylhydantoin + H2O = N-carbamoyl-D-phenylglycine + H(+). In terms of biological role, catalyzes the stereospecific hydrolysis of the cyclic amide bond of D-hydantoin derivatives with an aromatic side chains at the 5'-position. Has no activity on dihydropyrimidines. The physiological function is unknown. The protein is D-phenylhydantoinase of Escherichia coli O81 (strain ED1a).